Reading from the N-terminus, the 207-residue chain is Small ribosomal subunit protein uS2 (207 aa).

It belongs to the universal ribosomal protein uS2 family.

This is Small ribosomal subunit protein uS2 from Methanocella arvoryzae (strain DSM 22066 / NBRC 105507 / MRE50).